An 82-amino-acid polypeptide reads, in one-letter code: MPKRTLQGVVVSDKQDKTVVVRVDRRFTHPIYKKTIRRSKNYHAHDENNEFKAGDTVWIVESKPLSKLKRWTVVQSEKEKTA.

This sequence belongs to the universal ribosomal protein uS17 family. In terms of assembly, part of the 30S ribosomal subunit.

One of the primary rRNA binding proteins, it binds specifically to the 5'-end of 16S ribosomal RNA. The protein is Small ribosomal subunit protein uS17 of Afipia carboxidovorans (strain ATCC 49405 / DSM 1227 / KCTC 32145 / OM5) (Oligotropha carboxidovorans).